The chain runs to 477 residues: Ribulose bisphosphate carboxylase large chain (477 aa).

A propeptide spanning residues Met-1–Ser-2 is cleaved from the precursor. Position 3 is an N-acetylproline (Pro-3). Lys-14 is subject to N6,N6,N6-trimethyllysine. Residues Asn-123 and Thr-173 each coordinate substrate. Lys-175 serves as the catalytic Proton acceptor. A substrate-binding site is contributed by Lys-177. Positions 201, 203, and 204 each coordinate Mg(2+). The residue at position 201 (Lys-201) is an N6-carboxylysine. The active-site Proton acceptor is His-294. 3 residues coordinate substrate: Arg-295, His-327, and Ser-379.

This sequence belongs to the RuBisCO large chain family. Type I subfamily. In terms of assembly, heterohexadecamer of 8 large chains and 8 small chains; disulfide-linked. The disulfide link is formed within the large subunit homodimers. Mg(2+) serves as cofactor. Post-translationally, the disulfide bond which can form in the large chain dimeric partners within the hexadecamer appears to be associated with oxidative stress and protein turnover.

The protein resides in the plastid. Its subcellular location is the chloroplast. It carries out the reaction 2 (2R)-3-phosphoglycerate + 2 H(+) = D-ribulose 1,5-bisphosphate + CO2 + H2O. It catalyses the reaction D-ribulose 1,5-bisphosphate + O2 = 2-phosphoglycolate + (2R)-3-phosphoglycerate + 2 H(+). RuBisCO catalyzes two reactions: the carboxylation of D-ribulose 1,5-bisphosphate, the primary event in carbon dioxide fixation, as well as the oxidative fragmentation of the pentose substrate in the photorespiration process. Both reactions occur simultaneously and in competition at the same active site. The chain is Ribulose bisphosphate carboxylase large chain from Nicotiana otophora (Tobacco).